We begin with the raw amino-acid sequence, 469 residues long: Neuraminidase (469 aa).

Residues 1 to 6 (MNPNQK) lie on the Intravirion side of the membrane. Residues 7–27 (IITIGSICMIVGIISLILQIG) traverse the membrane as a helical segment. The tract at residues 11-33 (GSICMIVGIISLILQIGNIISIW) is involved in apical transport and lipid raft association. Over 28–469 (NIISIWVSHS…GAELPFTIDK (442 aa)) the chain is Virion surface. A hypervariable stalk region region spans residues 36–90 (HSIQTGNQNQPEICNQSIITYENNTWVNQTYVNISNTNFVTEQALAPVALAGNSS). Residues N50, N58, N63, N68, and N88 are each glycosylated (N-linked (GlcNAc...) asparagine; by host). The segment at 91 to 469 (LCPISGWAIY…GAELPFTIDK (379 aa)) is head of neuraminidase. Disulfide bonds link C92-C417, C124-C129, C184-C231, C233-C238, C279-C292, C281-C290, C318-C335, and C421-C446. R118 contacts substrate. N-linked (GlcNAc...) asparagine; by host glycosylation occurs at N146. The Proton donor/acceptor role is filled by D151. Residue R152 coordinates substrate. N-linked (GlcNAc...) asparagine; by host glycosylation is present at N235. 277–278 (EE) contributes to the substrate binding site. R293 provides a ligand contact to substrate. The Ca(2+) site is built by D294, G298, and D324. Residue R368 coordinates substrate. Y402 serves as the catalytic Nucleophile.

It belongs to the glycosyl hydrolase 34 family. As to quaternary structure, homotetramer. The cofactor is Ca(2+). N-glycosylated.

It is found in the virion membrane. Its subcellular location is the host apical cell membrane. It carries out the reaction Hydrolysis of alpha-(2-&gt;3)-, alpha-(2-&gt;6)-, alpha-(2-&gt;8)- glycosidic linkages of terminal sialic acid residues in oligosaccharides, glycoproteins, glycolipids, colominic acid and synthetic substrates.. Its activity is regulated as follows. Inhibited by the neuraminidase inhibitors zanamivir (Relenza) and oseltamivir (Tamiflu). These drugs interfere with the release of progeny virus from infected cells and are effective against all influenza strains. Resistance to neuraminidase inhibitors is quite rare. In terms of biological role, catalyzes the removal of terminal sialic acid residues from viral and cellular glycoconjugates. Cleaves off the terminal sialic acids on the glycosylated HA during virus budding to facilitate virus release. Additionally helps virus spread through the circulation by further removing sialic acids from the cell surface. These cleavages prevent self-aggregation and ensure the efficient spread of the progeny virus from cell to cell. Otherwise, infection would be limited to one round of replication. Described as a receptor-destroying enzyme because it cleaves a terminal sialic acid from the cellular receptors. May facilitate viral invasion of the upper airways by cleaving the sialic acid moieties on the mucin of the airway epithelial cells. Likely to plays a role in the budding process through its association with lipid rafts during intracellular transport. May additionally display a raft-association independent effect on budding. Plays a role in the determination of host range restriction on replication and virulence. Sialidase activity in late endosome/lysosome traffic seems to enhance virus replication. This is Neuraminidase from Influenza A virus (strain A/Chicken/Scotland/1959 H5N1).